The chain runs to 351 residues: Minor outer capsid protein P9 (351 aa).

Disordered stretches follow at residues 245–281 and 288–307; these read GGVP…DQPE and KKVD…GNVS. Residues 288–297 are compositionally biased toward basic and acidic residues; it reads KKVDASKDAP.

The protein belongs to the phytoreovirus minor outer capsid protein P9 family.

The protein resides in the virion. Its subcellular location is the host cytoplasm. Minor outer capsid protein. The chain is Minor outer capsid protein P9 from Rice dwarf virus (RDV).